The primary structure comprises 429 residues: Adenylosuccinate synthetase (429 aa).

Residues 12 to 18 (GDEGKGK) and 40 to 42 (GHT) each bind GTP. Asp13 (proton acceptor) is an active-site residue. Mg(2+) contacts are provided by Asp13 and Gly40. IMP is bound by residues 13-16 (DEGK), 38-41 (NAGH), Thr128, Arg142, Gln223, Thr238, and Arg302. The active-site Proton donor is His41. Substrate is bound at residue 298 to 304 (TTTGRPR). Residues Arg304, 330–332 (SID), and 412–414 (SVG) each bind GTP.

This sequence belongs to the adenylosuccinate synthetase family. As to quaternary structure, homodimer. It depends on Mg(2+) as a cofactor.

The protein localises to the cytoplasm. It catalyses the reaction IMP + L-aspartate + GTP = N(6)-(1,2-dicarboxyethyl)-AMP + GDP + phosphate + 2 H(+). It functions in the pathway purine metabolism; AMP biosynthesis via de novo pathway; AMP from IMP: step 1/2. Functionally, plays an important role in the de novo pathway of purine nucleotide biosynthesis. Catalyzes the first committed step in the biosynthesis of AMP from IMP. The sequence is that of Adenylosuccinate synthetase from Bacillus cereus (strain ATCC 10987 / NRS 248).